A 498-amino-acid polypeptide reads, in one-letter code: Acetyl-coenzyme A carboxylase carboxyl transferase subunit beta, chloroplastic (498 aa).

The disordered stretch occupies residues Ser-36–Ser-59. Positions Leu-231 to Lys-498 constitute a CoA carboxyltransferase N-terminal domain. Zn(2+)-binding residues include Cys-235, Cys-238, Cys-254, and Cys-257. A C4-type zinc finger spans residues Cys-235–Cys-257.

This sequence belongs to the AccD/PCCB family. As to quaternary structure, acetyl-CoA carboxylase is a heterohexamer composed of biotin carboxyl carrier protein, biotin carboxylase and 2 subunits each of ACCase subunit alpha and ACCase plastid-coded subunit beta (accD). Zn(2+) is required as a cofactor.

It localises to the plastid. The protein resides in the chloroplast stroma. It catalyses the reaction N(6)-carboxybiotinyl-L-lysyl-[protein] + acetyl-CoA = N(6)-biotinyl-L-lysyl-[protein] + malonyl-CoA. It functions in the pathway lipid metabolism; malonyl-CoA biosynthesis; malonyl-CoA from acetyl-CoA: step 1/1. Its function is as follows. Component of the acetyl coenzyme A carboxylase (ACC) complex. Biotin carboxylase (BC) catalyzes the carboxylation of biotin on its carrier protein (BCCP) and then the CO(2) group is transferred by the transcarboxylase to acetyl-CoA to form malonyl-CoA. The chain is Acetyl-coenzyme A carboxylase carboxyl transferase subunit beta, chloroplastic from Morus indica (Mulberry).